Consider the following 712-residue polypeptide: MFDTHTVEIEWAGRPLKLETGKIARQADGAVLATYGETVVLATVVSAKAPKPGQDFFPLTVNYQEKTYAAGKIPGGYFKREGRPSEKETLVSRLIDRPIRPLFPEGYKNDTQVVVTVVQHDLENDPDVLSMVAASAALTLSGVPFMGPVGGARVGYINGEYVLNPHLDEMDESSLDLVVAGTYDAVLMVESEAKELNEEVMLGAVMFGHKGFQPVLDAIIKLAEVAAKEPRDFQPEDYSELEAEMLKHFEAELREGYKITQKADRYAAVDAVKAKVKAHFFPEGVEPKYTAEVIGAVFKHLQAKIVRWNILDTKSRIDGRDLSTVRPIVSEVGLLPRTHGSALFTRGETQAIVVATLGTGEDEQYVDSLTGMYKERFLLHYNFPPYSVGETGRMGSPGRREIGHGKLAWRAIRPMLPTAEQFPYTLRVVSEITESNGSSSMATVCGTSLALMDAGVPLAKPVAGIAMGLILEGDRFAVLSDILGDEDHLGDMDFKVAGTADGITSLQMDIKIAGITEEIMKVALGQAQGGRAHILGEMAKAITESRGQLGEFAPRIEVMNIPVDKIREVIGSGGKVIREIVEKTGAKINIEDDGTVKIASSSGKEIEAARKWIHSIVAEPEIGQIYEGTVVKTADFGAFVNFFGARDGLVHISQLASERVAKTQDVVKEGDKVWVKLLGFDERGKVRLSMKVVDQATGQEIPNEKKKEEAAE.

The Mg(2+) site is built by Asp487 and Asp493. Residues 554–613 (PRIEVMNIPVDKIREVIGSGGKVIREIVEKTGAKINIEDDGTVKIASSSGKEIEAARKWI) form the KH domain. The S1 motif domain maps to 623 to 691 (GQIYEGTVVK…ERGKVRLSMK (69 aa)).

The protein belongs to the polyribonucleotide nucleotidyltransferase family. Mg(2+) is required as a cofactor.

Its subcellular location is the cytoplasm. The enzyme catalyses RNA(n+1) + phosphate = RNA(n) + a ribonucleoside 5'-diphosphate. Functionally, involved in mRNA degradation. Catalyzes the phosphorolysis of single-stranded polyribonucleotides processively in the 3'- to 5'-direction. This is Polyribonucleotide nucleotidyltransferase from Rhizobium leguminosarum bv. trifolii (strain WSM2304).